The following is a 280-amino-acid chain: MAEPLAVDPTGLSAAAAKLAGLVFPQPPAPIAVSGTDSVVAAINETMPSIESLVSDGLPGVKAALTRTASNMNAAADVYAKTDQSLGTSLSQYAFGSSGEGLAGVASVGGQPSQATQLLSTPVSQVTTQLGETAAELAPRVVAKVPQLVQLAPHAVQMSQNASPIAQTISQTAQQAAQSAQGGSGPMPAQLASAEKPATEQAEPVHEVTNDDQGDQGDVQPAEVVAAARDEGAGASPGQQPGGGVPAQAMDTGAGARPAASPLAAPVDPSTPAPSTTTTL.

S70 is modified (phosphoserine). Low complexity-rich tracts occupy residues 167 to 181 (QTIS…QSAQ) and 246 to 280 (PAQA…TTTL). The disordered stretch occupies residues 167-280 (QTISQTAQQA…TPAPSTTTTL (114 aa)).

In terms of processing, phosphorylated at Ser-70.

It localises to the secreted. Its function is as follows. Could be involved in regulation of growth and intracellular survival. The sequence is that of ESX-1 secretion-associated protein EspJ from Mycobacterium tuberculosis (strain CDC 1551 / Oshkosh).